The chain runs to 1191 residues: MPALWLSCCLGVALLLPAAQATSRREVCDCNGKSRQCVFDQELHRQTGSGFRCLNCNDNTAGVHCERCREGFYRHRDRDRCLPCNCHSKGSLSAGCDNSGQCRCKPGVTGQRCDRCQPGFHMLTDAGCTRDQGQLDSKCDCDPAGISGPCDSGRCVCKPAVTGERCDRCRPGYYHLDRANPEGCTQCFCYGHSASCHASADFSVHKITSTFSQDVDGWKAVQRNGAPAKLHWSQRHRDVFSSARRSDPVYFVAPAKFLGNQQVSYGQSLSFDYRVDRGGRQPSAYDVILEGAGLQIRAPLMAPGKTLPCGITKTYTFRLNEHPSSHWSPQLSYFEYRRLLRNLTALLIRATYGEYSTGYIDNVTLVSARPVSGAPAPWVERCVCPAGYKGQFCQECASGYKRDSARLGPFGACVPCNCQGGGACDPDTGDCYSGDENPDIECADCPIGFYNDPHDPRSCKPCPCHNGFSCSVMPETEEVVCNNCPPGVTGARCELCADGFFGDPFGERGPVRPCQRCQCNNNVDPNASGNCDQLTGRCLKCIYNTAGVYCDQCKAGYFGDPLAPNPADKCRACNCSPMGSEPGECRGDGSCVCKPGFGGLNCDHAALTSCPACYNQVKIQMDQFTQQLQSLEALVSKAQGGGGGGTVPVQLEGRIEQAEQALQDILGEAQISEGAMRAVAVRLAKARSQENDYKTRLDDLKMTAERIRALGSQHQNRVQDTSRLISQMRLSLAGSEALLENTNIHSSEHYVGPNDFKSLAQEATRKADSHAESANAMKQLARETEDYSKQALSLARKLLSGGGGSGSWDSSVVQGLMGKLEKTKSLSQQLSLEGTQADIEADRSYQHSLRLLDSASQLQGVSDLSFQVEAKRIRQKADSLSNLVTRQTDAFTRVRNNLGNWEKETRQLLQTGKDRRQTSDQLLSRANLAKNRAQEALSMGNATFYEVENILKNLREFDLQVEDRKAEAEEAMKRLSSISQKVADASDKTQQAETALGSATADTQRAKNAAREALEISSEIELEIGSLNLEANVTADGALAMEKGTATLKSEMREMIELARKELEFDTDKDTVQLVITEAQQADARATSAGVTIQDTLNTLDGILHLIDQPGSVDEEGMMLLEQGLFQAKTQINSRLRPLMSDLEERVRRQRNHLHLLETSIDGILADVKNLENIRDNLPPGCYNTQALEQQ.

Residues 1-21 (MPALWLSCCLGVALLLPAAQA) form the signal peptide. 12 cysteine pairs are disulfide-bonded: Cys-28/Cys-37, Cys-30/Cys-53, Cys-56/Cys-65, Cys-68/Cys-81, Cys-84/Cys-96, Cys-86/Cys-102, Cys-104/Cys-113, Cys-116/Cys-128, Cys-139/Cys-150, Cys-141/Cys-155, Cys-157/Cys-166, and Cys-169/Cys-184. Laminin EGF-like domains are found at residues 28 to 83 (CDCN…RCLP), 84 to 130 (CNCH…GCTR), and 139 to 186 (CDCD…GCTQ). Positions 187-196 (CFCYGHSASC) constitute a Laminin EGF-like 4; first part domain. Positions 213-381 (QDVDGWKAVQ…SGAPAPWVER (169 aa)) constitute a Laminin IV type A domain. N-linked (GlcNAc...) asparagine glycosylation is found at Asn-342 and Asn-362. The region spanning 382–415 (CVCPAGYKGQFCQECASGYKRDSARLGPFGACVP) is the Laminin EGF-like 4; second part domain. Laminin EGF-like domains lie at 416–461 (CNCQ…SCKP), 462–516 (CPCH…PCQR), and 517–572 (CQCN…KCRA). 11 disulfides stabilise this stretch: Cys-462-Cys-470, Cys-464-Cys-481, Cys-484-Cys-493, Cys-496-Cys-514, Cys-517-Cys-531, Cys-519-Cys-538, Cys-541-Cys-550, Cys-553-Cys-570, Cys-573-Cys-585, Cys-575-Cys-591, and Cys-593-Cys-602. An N-linked (GlcNAc...) asparagine glycan is attached at Asn-526. Positions 573–602 (CNCSPMGSEPGECRGDGSCVCKPGFGGLNC) constitute a Laminin EGF-like 8; truncated domain. The Cell attachment site motif lies at 586–588 (RGD). Residues 603 to 1191 (DHAALTSCPA…CYNTQALEQQ (589 aa)) form a domain II and I region. Coiled-coil stretches lie at residues 612 to 710 (ACYN…IRAL) and 759 to 786 (LAQE…ETED). O-linked (Xyl...) (chondroitin sulfate) serine glycosylation is present at Ser-805. Residue Asn-941 is glycosylated (N-linked (GlcNAc...) asparagine). The stretch at 946–996 (EVENILKNLREFDLQVEDRKAEAEEAMKRLSSISQKVADASDKTQQAETAL) forms a coiled coil. An N-linked (GlcNAc...) asparagine glycan is attached at Asn-1032. Residues 1139–1178 (LMSDLEERVRRQRNHLHLLETSIDGILADVKNLENIRDNL) are a coiled coil.

Laminin is a complex glycoprotein, consisting of three different polypeptide chains (alpha, beta, gamma), which are bound to each other by disulfide bonds into a cross-shaped molecule comprising one long and three short arms with globules at each end. Gamma-2 is a subunit of laminin-5 (laminin-332 or epiligrin/kalinin/nicein). Binds to fibulin-1, fibulin-1c, fibulin-2 and nidogen. In terms of processing, O-glycosylated; contains chondroitin sulfate (CS). In terms of tissue distribution, epithelial cells of many tissues, particularly high levels in tongue, hair follicles and kidney. Basement membranes of the collecting tubules of kidney and pancreas.

It is found in the secreted. The protein localises to the extracellular space. It localises to the extracellular matrix. Its subcellular location is the basement membrane. Functionally, binding to cells via a high affinity receptor, laminin is thought to mediate the attachment, migration and organization of cells into tissues during embryonic development by interacting with other extracellular matrix components. The polypeptide is Laminin subunit gamma-2 (Lamc2) (Mus musculus (Mouse)).